The following is a 236-amino-acid chain: 7-cyano-7-deazaguanine synthase (236 aa).

7-17 lines the ATP pocket; the sequence is CSGGLDSVSLA. C185, C193, C196, and C199 together coordinate Zn(2+).

This sequence belongs to the QueC family. Requires Zn(2+) as cofactor.

It catalyses the reaction 7-carboxy-7-deazaguanine + NH4(+) + ATP = 7-cyano-7-deazaguanine + ADP + phosphate + H2O + H(+). Its pathway is purine metabolism; 7-cyano-7-deazaguanine biosynthesis. Catalyzes the ATP-dependent conversion of 7-carboxy-7-deazaguanine (CDG) to 7-cyano-7-deazaguanine (preQ(0)). The polypeptide is 7-cyano-7-deazaguanine synthase (Rhizobium meliloti (strain 1021) (Ensifer meliloti)).